A 316-amino-acid chain; its full sequence is MTTKLEQLRKLTTVVADTGDIEAIAKYTPEDATTNPSLILKAAEITEYAPLIDASIEYAKAQSNDKAQQVQDTCDMLAVNIGKEILKVVPGRISTEVDARLSYDTEGSVAKARQLIKMYNDAGITNDRILIKLASTWEGIRAAEILEKEGINCNLTLLFSFAQARACAEAGVYLISPFVGRIMDWYKAKEGRDFEPSEDPGVVSVTGIYNYYKEHGYNTVVMGASFRNIGEILELAGCDRLTISPNLLQELEEATGEVVEKLVDTNGNKARPAAMTHAEFLWDHNQDAMAVEKLAEGIRNFAVDQGKLEAMIATKL.

Lys-132 functions as the Schiff-base intermediate with substrate in the catalytic mechanism.

It belongs to the transaldolase family. Type 1 subfamily. As to quaternary structure, homodimer.

The protein localises to the cytoplasm. It catalyses the reaction D-sedoheptulose 7-phosphate + D-glyceraldehyde 3-phosphate = D-erythrose 4-phosphate + beta-D-fructose 6-phosphate. It functions in the pathway carbohydrate degradation; pentose phosphate pathway; D-glyceraldehyde 3-phosphate and beta-D-fructose 6-phosphate from D-ribose 5-phosphate and D-xylulose 5-phosphate (non-oxidative stage): step 2/3. In terms of biological role, transaldolase is important for the balance of metabolites in the pentose-phosphate pathway. The sequence is that of Transaldolase from Aliivibrio fischeri (strain ATCC 700601 / ES114) (Vibrio fischeri).